Consider the following 146-residue polypeptide: uncharacterized protein (146 aa).

This is an uncharacterized protein from Orgyia pseudotsugata (Douglas-fir tussock moth).